We begin with the raw amino-acid sequence, 249 residues long: 5'-nucleotidase SurE (249 aa).

Positions 8, 9, 39, and 91 each coordinate a divalent metal cation.

The protein belongs to the SurE nucleotidase family. A divalent metal cation serves as cofactor.

It localises to the cytoplasm. The catalysed reaction is a ribonucleoside 5'-phosphate + H2O = a ribonucleoside + phosphate. Its function is as follows. Nucleotidase that shows phosphatase activity on nucleoside 5'-monophosphates. This is 5'-nucleotidase SurE from Pseudomonas putida (strain W619).